The primary structure comprises 439 residues: MPAIAVLAAAAAAWCFLQVESRHLDALAGGAGPNHGNFLDNDQWLSTVSQYDRDKYWNRFRDDDYFRNWNPNKPFDQALDPSKDPCLKVKCSPHKVCVTQDYQTALCVSRKHLLPRQKKGNVAQKHWVGPSNLVKCKPCPVAQSAMVCGSDGHSYTSKCKLEFHACSTGKSLATLCDGPCPCLPEPEPPKHKAERSACTDKELRNLASRLKDWFGALHEDANRVIKPTSSNTAQGRFDTSILPICKDSLGWMFNKLDMNYDLLLDPSEINAIYLDKYEPCIKPLFNSCDSFKDGKLSNNEWCYCFQKPGGLPCQNEMNRIQKLSKGKSLLGAFIPRCNEEGYYKATQCHGSTGQCWCVDKYGNELAGSRKQGAVSCEEEQETSGDFGSGGSVVLLDDLEYERELGPKDKEGKLRVHTRAVTEDDEDEDDDKEDEVGYIW.

The signal sequence occupies residues Met1 to Ser21. 5 cysteine pairs are disulfide-bonded: Cys86/Cys97, Cys91/Cys107, Cys136/Cys166, Cys139/Cys159, and Cys148/Cys180. A Kazal-like domain is found at Pro130–Cys182. A glycan (O-linked (GalNAc...) threonine) is linked at Thr228. The region spanning Gly310–Cys376 is the Thyroglobulin type-1 domain. Intrachain disulfides connect Cys313-Cys337, Cys348-Cys355, and Cys357-Cys376. 2 O-linked (Xyl...) (glycosaminoglycan) serine glycosylation sites follow: Ser383 and Ser388. Residues Val415 to Trp439 are disordered. The segment covering Glu422–Trp439 has biased composition (acidic residues).

Post-translationally, O-glycosylated. Glycosaminoglycan that contains chondroitin sulfate and heparan sulfate.

The protein localises to the secreted. Its subcellular location is the extracellular space. It is found in the extracellular matrix. Functionally, may play a role in cell-cell and cell-matrix interactions. May contribute to various neuronal mechanisms in the central nervous system. In Homo sapiens (Human), this protein is Testican-1 (SPOCK1).